The sequence spans 404 residues: LL-diaminopimelate aminotransferase (404 aa).

Residues tyrosine 15 and glycine 42 each coordinate substrate. Pyridoxal 5'-phosphate contacts are provided by residues tyrosine 72, 108-109, tyrosine 132, asparagine 188, tyrosine 219, and 247-249; these read AK and SFS. Substrate is bound by residues lysine 109, tyrosine 132, and asparagine 188. Lysine 250 is modified (N6-(pyridoxal phosphate)lysine). Pyridoxal 5'-phosphate is bound by residues arginine 258 and asparagine 288. Residues asparagine 288 and arginine 384 each contribute to the substrate site.

This sequence belongs to the class-I pyridoxal-phosphate-dependent aminotransferase family. LL-diaminopimelate aminotransferase subfamily. In terms of assembly, homodimer. Requires pyridoxal 5'-phosphate as cofactor.

The catalysed reaction is (2S,6S)-2,6-diaminopimelate + 2-oxoglutarate = (S)-2,3,4,5-tetrahydrodipicolinate + L-glutamate + H2O + H(+). It functions in the pathway amino-acid biosynthesis; L-lysine biosynthesis via DAP pathway; LL-2,6-diaminopimelate from (S)-tetrahydrodipicolinate (aminotransferase route): step 1/1. Involved in the synthesis of meso-diaminopimelate (m-DAP or DL-DAP), required for both lysine and peptidoglycan biosynthesis. Catalyzes the direct conversion of tetrahydrodipicolinate to LL-diaminopimelate. This Agathobacter rectalis (strain ATCC 33656 / DSM 3377 / JCM 17463 / KCTC 5835 / VPI 0990) (Eubacterium rectale) protein is LL-diaminopimelate aminotransferase.